The following is a 360-amino-acid chain: Probable dual-specificity RNA methyltransferase RlmN (360 aa).

Glu-97 acts as the Proton acceptor in catalysis. In terms of domain architecture, Radical SAM core spans 103-330; the sequence is DGDRLTFCIS…TAVRRSRGLD (228 aa). Cys-110 and Cys-335 form a disulfide bridge. Residues Cys-117, Cys-121, and Cys-124 each contribute to the [4Fe-4S] cluster site. S-adenosyl-L-methionine contacts are provided by residues 165-166, Ser-197, 220-222, and His-292; these read GE and SIH. Residue Cys-335 is the S-methylcysteine intermediate of the active site.

It belongs to the radical SAM superfamily. RlmN family. [4Fe-4S] cluster serves as cofactor.

The protein localises to the cytoplasm. The enzyme catalyses adenosine(2503) in 23S rRNA + 2 reduced [2Fe-2S]-[ferredoxin] + 2 S-adenosyl-L-methionine = 2-methyladenosine(2503) in 23S rRNA + 5'-deoxyadenosine + L-methionine + 2 oxidized [2Fe-2S]-[ferredoxin] + S-adenosyl-L-homocysteine. It carries out the reaction adenosine(37) in tRNA + 2 reduced [2Fe-2S]-[ferredoxin] + 2 S-adenosyl-L-methionine = 2-methyladenosine(37) in tRNA + 5'-deoxyadenosine + L-methionine + 2 oxidized [2Fe-2S]-[ferredoxin] + S-adenosyl-L-homocysteine. In terms of biological role, specifically methylates position 2 of adenine 2503 in 23S rRNA and position 2 of adenine 37 in tRNAs. The polypeptide is Probable dual-specificity RNA methyltransferase RlmN (Gemmatimonas aurantiaca (strain DSM 14586 / JCM 11422 / NBRC 100505 / T-27)).